A 161-amino-acid chain; its full sequence is MAENNRAVVKLKERFANALLDCTEYRGEVTVTVKKENILEVLKCLRDDLRYNFLTDVTAVDYLGQDPRFMVVYHLMSIPNKDRIRVKAPLTEADCSIDSATALWNSADWVEREAYDMFGIDFKNHPNLVRILMTDDWVGHPLRKDYPLQGPDREPYKGRLS.

It belongs to the complex I 30 kDa subunit family. As to quaternary structure, NDH-1 is composed of 14 different subunits. Subunits NuoB, C, D, E, F, and G constitute the peripheral sector of the complex.

It localises to the cell inner membrane. It carries out the reaction a quinone + NADH + 5 H(+)(in) = a quinol + NAD(+) + 4 H(+)(out). In terms of biological role, NDH-1 shuttles electrons from NADH, via FMN and iron-sulfur (Fe-S) centers, to quinones in the respiratory chain. The immediate electron acceptor for the enzyme in this species is believed to be ubiquinone. Couples the redox reaction to proton translocation (for every two electrons transferred, four hydrogen ions are translocated across the cytoplasmic membrane), and thus conserves the redox energy in a proton gradient. This Citrifermentans bemidjiense (strain ATCC BAA-1014 / DSM 16622 / JCM 12645 / Bem) (Geobacter bemidjiensis) protein is NADH-quinone oxidoreductase subunit C.